The following is a 93-amino-acid chain: Putative regulatory protein Cthe_1316 (93 aa).

Residues 74–93 (RLNTKEAEDVEVDDEEEIDE) form a disordered region. Positions 81-93 (EDVEVDDEEEIDE) are enriched in acidic residues.

It belongs to the RemA family.

The protein is Putative regulatory protein Cthe_1316 of Acetivibrio thermocellus (strain ATCC 27405 / DSM 1237 / JCM 9322 / NBRC 103400 / NCIMB 10682 / NRRL B-4536 / VPI 7372) (Clostridium thermocellum).